A 2325-amino-acid chain; its full sequence is Protein sidekick homolog (2325 aa).

The signal sequence occupies residues 1–26; it reads MRNRLLLIFYTTTVLWTIGYTQLVLG. Topologically, residues 27-2019 are extracellular; the sequence is KPPIFQDGGS…IPDDPFYTTW (1993 aa). Ig-like C2-type domains follow at residues 28 to 105, 217 to 319, and 324 to 397; these read PPIF…AAIS, PSLQ…AYMT, and PILK…ADLA. Cystine bridges form between C52–C94, C247–C301, and C345–C386. N-linked (GlcNAc...) asparagine glycosylation occurs at N407. Ig-like C2-type domains lie at 456 to 544 and 547 to 638; these read PSQK…VQVN and SLIE…AMLQ. 2 cysteine pairs are disulfide-bonded: C480–C528 and C568–C622. N-linked (GlcNAc...) asparagine glycosylation is found at N632, N655, N807, N868, N932, and N1016. Fibronectin type-III domains follow at residues 645–751, 756–853, 858–957, 961–1055, 1059–1154, 1159–1254, 1259–1359, 1363–1457, 1463–1566, 1571–1671, 1673–1775, 1776–1872, and 1873–2004; these read MPER…MPQQ, APRN…TSEG, APKN…TEED, SVDE…VPPE, RPSM…TLQT, PSQR…TYES, SPRN…TMED, PPES…SSVR, APAP…TLPS, QPIS…VGYS, PKRN…DKPG, PVGI…SKDG, and PPPP…TEQL. Residues 1036–1059 are disordered; it reads TRKGDGPVEETKFESGVPPELPGR. Residues 1037-1048 are compositionally biased toward basic and acidic residues; it reads RKGDGPVEETKF. A glycan (N-linked (GlcNAc...) asparagine) is linked at N1107. The tract at residues 1137 to 1161 is disordered; sequence KGRGAPSEPSRSFETLQTNPDTPSQ. Positions 1145 to 1161 are enriched in polar residues; it reads PSRSFETLQTNPDTPSQ. N-linked (GlcNAc...) asparagine glycosylation occurs at N1614. Disordered regions lie at residues 1857–1884 and 1918–1947; these read GEQR…ITSG and PANG…ATST. N-linked (GlcNAc...) asparagine glycosylation is present at N1863. Residues 1935–1947 show a composition bias toward low complexity; it reads AKSAAQTAAATST. The chain crosses the membrane as a helical span at residues 2020-2040; that stretch reads WFMALVAMGAFVLIVIIIAIL. The Cytoplasmic segment spans residues 2041 to 2325; that stretch reads CVTGSSAKYR…NLTTGFSSFV (285 aa). 4 disordered regions span residues 2080 to 2113, 2164 to 2187, 2202 to 2226, and 2285 to 2325; these read NMTR…SVLG, TAYV…PTRS, RGHI…LQQP, and ILTG…SSFV. The span at 2091–2100 shows a compositional bias: polar residues; sequence PGTTQSWVSD. Over residues 2215 to 2226 the composition is skewed to low complexity; the sequence is GSQPQGSPLQQP. Polar residues-rich tracts occupy residues 2294–2305 and 2313–2325; these read AGRSSTTDSTSE and ATPN…SSFV.

Belongs to the sidekick family.

The protein localises to the membrane. Cell adhesion protein. This is Protein sidekick homolog (rig-4) from Caenorhabditis elegans.